Consider the following 119-residue polypeptide: UPF0102 protein Pmen_0910 (119 aa).

This sequence belongs to the UPF0102 family.

This Ectopseudomonas mendocina (strain ymp) (Pseudomonas mendocina) protein is UPF0102 protein Pmen_0910.